Here is a 96-residue protein sequence, read N- to C-terminus: UPF0235 protein YggU (96 aa).

The protein belongs to the UPF0235 family.

This Shigella flexneri protein is UPF0235 protein YggU.